The chain runs to 616 residues: Homeodomain-interacting protein kinase 4 (616 aa).

The 337-residue stretch at 11–347 (YDIIEVLGKG…PSAALRHPFV (337 aa)) folds into the Protein kinase domain. Residues 17–25 (LGKGTFGEV) and lysine 40 each bind ATP. The active-site Proton acceptor is aspartate 136. Residues 486–616 (HKARKPPAGS…SFLQHVTGHH (131 aa)) are disordered. Positions 496–511 (KSDSNFSNLIRLSQVS) are enriched in polar residues. Residue serine 511 is modified to Phosphoserine.

Belongs to the protein kinase superfamily. CMGC Ser/Thr protein kinase family. HIPK subfamily. In terms of processing, autophosphorylated.

The protein resides in the cytoplasm. The enzyme catalyses L-seryl-[protein] + ATP = O-phospho-L-seryl-[protein] + ADP + H(+). The catalysed reaction is L-threonyl-[protein] + ATP = O-phospho-L-threonyl-[protein] + ADP + H(+). In terms of biological role, protein kinase that phosphorylates human TP53 at Ser-9, and thus induces TP53 repression of BIRC5 promoter. May act as a corepressor of transcription factors (Potential). This Homo sapiens (Human) protein is Homeodomain-interacting protein kinase 4 (HIPK4).